The chain runs to 241 residues: Large ribosomal subunit protein uL2 (241 aa).

The interval 201-241 is disordered; that stretch reads VDHPHGGGNRQHPGRPTTVSRHAPPGRKVGSIAAKRTGLKR.

Belongs to the universal ribosomal protein uL2 family. In terms of assembly, part of the 50S ribosomal subunit. Forms a bridge to the 30S subunit in the 70S ribosome.

Functionally, one of the primary rRNA binding proteins. Required for association of the 30S and 50S subunits to form the 70S ribosome, for tRNA binding and peptide bond formation. It has been suggested to have peptidyltransferase activity; this is somewhat controversial. Makes several contacts with the 16S rRNA in the 70S ribosome. The polypeptide is Large ribosomal subunit protein uL2 (Methanobrevibacter smithii (strain ATCC 35061 / DSM 861 / OCM 144 / PS)).